The following is a 248-amino-acid chain: Probable transcriptional regulator LumQ (248 aa).

The region spanning 148–246 (VLIDNYIEQH…GMSPTRYQFF (99 aa)) is the HTH araC/xylS-type domain. DNA-binding regions (H-T-H motif) lie at residues 165–186 (AELS…KSQM) and 213–236 (LSQV…RRLY).

In terms of biological role, probable transcriptional regulator. Its target gene(s) is not yet known. This is Probable transcriptional regulator LumQ (lumQ) from Photobacterium leiognathi.